A 184-amino-acid polypeptide reads, in one-letter code: Ribosome-recycling factor (184 aa).

This sequence belongs to the RRF family.

The protein localises to the cytoplasm. Its function is as follows. Responsible for the release of ribosomes from messenger RNA at the termination of protein biosynthesis. May increase the efficiency of translation by recycling ribosomes from one round of translation to another. The sequence is that of Ribosome-recycling factor from Desulfotalea psychrophila (strain LSv54 / DSM 12343).